The following is a 176-amino-acid chain: Large ribosomal subunit protein uL6 (176 aa).

It belongs to the universal ribosomal protein uL6 family. In terms of assembly, part of the 50S ribosomal subunit.

In terms of biological role, this protein binds to the 23S rRNA, and is important in its secondary structure. It is located near the subunit interface in the base of the L7/L12 stalk, and near the tRNA binding site of the peptidyltransferase center. In Burkholderia thailandensis (strain ATCC 700388 / DSM 13276 / CCUG 48851 / CIP 106301 / E264), this protein is Large ribosomal subunit protein uL6.